A 296-amino-acid chain; its full sequence is tRNA dimethylallyltransferase (296 aa).

9–16 (GPTAVGKT) contacts ATP. Substrate is bound at residue 11 to 16 (TAVGKT). The segment at 34–37 (DSRQ) is interaction with substrate tRNA.

This sequence belongs to the IPP transferase family. In terms of assembly, monomer. Mg(2+) serves as cofactor.

The enzyme catalyses adenosine(37) in tRNA + dimethylallyl diphosphate = N(6)-dimethylallyladenosine(37) in tRNA + diphosphate. In terms of biological role, catalyzes the transfer of a dimethylallyl group onto the adenine at position 37 in tRNAs that read codons beginning with uridine, leading to the formation of N6-(dimethylallyl)adenosine (i(6)A). The polypeptide is tRNA dimethylallyltransferase (Chloroflexus aurantiacus (strain ATCC 29366 / DSM 635 / J-10-fl)).